We begin with the raw amino-acid sequence, 164 residues long: Transcriptional repressor NrdR (164 aa).

A zinc finger lies at 3 to 34 (CPFCRHDDTQVVDSRVSEDGAAIRRRRRCPAC). The ATP-cone domain occupies 49–139 (PSVVKKDGSR…VYRRFEDVSE (91 aa)).

This sequence belongs to the NrdR family. The cofactor is Zn(2+).

Its function is as follows. Negatively regulates transcription of bacterial ribonucleotide reductase nrd genes and operons by binding to NrdR-boxes. This chain is Transcriptional repressor NrdR, found in Paraburkholderia phymatum (strain DSM 17167 / CIP 108236 / LMG 21445 / STM815) (Burkholderia phymatum).